A 412-amino-acid chain; its full sequence is Lysosomal phospholipase A and acyltransferase (412 aa).

The first 33 residues, 1–33 (MGLHLRPYRVGLLPDGLLFLLLLLMLLADPALP), serve as a signal peptide directing secretion. Asp46 is a substrate binding site. Cys65 and Cys89 form a disulfide bridge. N-linked (GlcNAc...) asparagine glycosylation occurs at Asn99. The Acyl-ester intermediate role is filled by Ser198. Residue Ser198 participates in Zn(2+) binding. Met199 is a binding site for substrate. Asn273 and Asn289 each carry an N-linked (GlcNAc...) asparagine glycan. Residues Asp340 and Cys355 each contribute to the Zn(2+) site. Catalysis depends on charge relay system residues Asp360 and His392. His392 provides a ligand contact to Zn(2+). N-linked (GlcNAc...) asparagine glycosylation is present at Asn398.

This sequence belongs to the AB hydrolase superfamily. Lipase family. Post-translationally, N-glycosylated. N-glycosylation is important for maturation of the enzyme and normal subcellular location. Detected in blood plasma (at protein level). Ubiquitous. Highly expressed in heart, placenta, skeletal muscle, kidney and pancreas. Detected at lower levels in spleen, thymus, prostate, testis, ovary, small intestine, colon and peripheral blood leukocytes.

It is found in the lysosome. The protein localises to the secreted. Its subcellular location is the membrane. The catalysed reaction is a 1,2-diacyl-sn-glycero-3-phosphocholine + H2O = a 2-acyl-sn-glycero-3-phosphocholine + a fatty acid + H(+). It catalyses the reaction 1-hexadecanoyl-2-(9Z-octadecenoyl)-sn-glycero-3-phosphocholine + H2O = 2-(9Z-octadecenoyl)-sn-glycero-3-phosphocholine + hexadecanoate + H(+). It carries out the reaction 1-hexadecanoyl-2-glutaroyl-sn-glycero-3-phosphocholine + H2O = 2-glutaroyl-sn-glycero-3-phosphocholine + hexadecanoate + H(+). The enzyme catalyses 1-hexadecanoyl-2-nonadioyl-sn-glycero-3-phosphocholine + H2O = 2-nonadioyl-sn-glycero-3-phosphocholine + hexadecanoate + H(+). The catalysed reaction is 1-hexadecanoyl-2-(5-oxopentanoyl)-sn-glycero-3-phosphocholine + H2O = 2-(5-oxopentanoyl)-sn-glycero-3-phosphocholine + hexadecanoate + H(+). It catalyses the reaction 1-hexadecanoyl-2-(9-oxononanoyl)-sn-glycero-3-phosphocholine + H2O = 2-(9-oxononanoyl)-sn-glycero-3-phosphocholine + hexadecanoate + H(+). It carries out the reaction 1,2-dihexadecanoyl-sn-glycero-3-phosphocholine + H2O = 2-hexadecanoyl-sn-glycero-3-phosphocholine + hexadecanoate + H(+). The enzyme catalyses a 1,2-diacyl-sn-glycero-3-phosphocholine + H2O = a 1-acyl-sn-glycero-3-phosphocholine + a fatty acid + H(+). The catalysed reaction is 1,2-di-(9Z-octadecenoyl)-sn-glycero-3-phosphocholine + H2O = 1-(9Z-octadecenoyl)-sn-glycero-3-phosphocholine + (9Z)-octadecenoate + H(+). It catalyses the reaction 1-hexadecanoyl-2-(9Z-octadecenoyl)-sn-glycero-3-phosphocholine + H2O = 1-hexadecanoyl-sn-glycero-3-phosphocholine + (9Z)-octadecenoate + H(+). It carries out the reaction 1,2-dihexadecanoyl-sn-glycero-3-phosphocholine + H2O = 1-hexadecanoyl-sn-glycero-3-phosphocholine + hexadecanoate + H(+). The enzyme catalyses a 1-acyl-sn-glycero-3-phosphocholine + H2O = sn-glycerol 3-phosphocholine + a fatty acid + H(+). The catalysed reaction is 1-hexadecanoyl-sn-glycero-3-phosphocholine + H2O = sn-glycerol 3-phosphocholine + hexadecanoate + H(+). It catalyses the reaction N-(acetyl)-sphing-4-enine + a 1,2-diacyl-sn-glycero-3-phosphoethanolamine = 1-O-acyl-N-(acetyl)-sphing-4-enine + a 2-acyl-sn-glycero-3-phosphoethanolamine. It carries out the reaction 1-hexadecanoyl-2-(9Z-octadecenoyl)-sn-glycero-3-phosphoethanolamine + N-(acetyl)-sphing-4-enine = 2-(9Z-octadecenoyl)-sn-glycero-3-phosphoethanolamine + 1-hexadecanoyl-N-(acetyl)-sphing-4-enine. The enzyme catalyses 1-hexadecanoyl-2-(9Z,12Z-octadecadienoyl)-sn-glycero-3-phosphoethanolamine + N-(acetyl)-sphing-4-enine = 2-(9Z,12Z)-octadecadienoyl-sn-glycero-3-phosphoethanolamine + 1-hexadecanoyl-N-(acetyl)-sphing-4-enine. The catalysed reaction is 1-hexadecanoyl-2-(5Z,8Z,11Z,14Z-eicosatetraenoyl)-sn-glycero-3-phosphoethanolamine + N-(acetyl)-sphing-4-enine = 2-(5Z,8Z,11Z,14Z)-eicosatetraenoyl-sn-glycero-3-phosphoethanolamine + 1-hexadecanoyl-N-(acetyl)-sphing-4-enine. It catalyses the reaction N-(acetyl)-sphing-4-enine + a 1,2-diacyl-sn-glycero-3-phosphoethanolamine = 1-O-acyl-N-(acetyl)-sphing-4-enine + a 1-acyl-sn-glycero-3-phosphoethanolamine. It carries out the reaction 1-hexadecanoyl-2-(9Z-octadecenoyl)-sn-glycero-3-phosphoethanolamine + N-(acetyl)-sphing-4-enine = 1-(9Z-octadecenoyl)-N-(acetyl)-sphing-4-enine + 1-hexadecanoyl-sn-glycero-3-phosphoethanolamine. The enzyme catalyses 1-hexadecanoyl-2-(9Z,12Z-octadecadienoyl)-sn-glycero-3-phosphoethanolamine + N-(acetyl)-sphing-4-enine = 1-(9Z,12Z-octadecadienoyl)-N-acetylsphing-4-enine + 1-hexadecanoyl-sn-glycero-3-phosphoethanolamine. The catalysed reaction is 1-hexadecanoyl-2-(5Z,8Z,11Z,14Z-eicosatetraenoyl)-sn-glycero-3-phosphoethanolamine + N-(acetyl)-sphing-4-enine = 1-(5Z,8Z,11Z,14Z)-eicosatetraenoyl-N-(acetyl)-sphing-4-enine + 1-hexadecanoyl-sn-glycero-3-phosphoethanolamine. It catalyses the reaction N-(acetyl)-sphing-4-enine + a 1,2-diacyl-sn-glycero-3-phosphocholine = 1-O-acyl-N-(acetyl)-sphing-4-enine + a 1-acyl-sn-glycero-3-phosphocholine. It carries out the reaction 1-hexadecanoyl-2-(9Z-octadecenoyl)-sn-glycero-3-phosphocholine + N-(acetyl)-sphing-4-enine = 1-(9Z-octadecenoyl)-N-(acetyl)-sphing-4-enine + 1-hexadecanoyl-sn-glycero-3-phosphocholine. The enzyme catalyses 1-hexadecanoyl-2-(9Z,12Z-octadecadienoyl)-sn-glycero-3-phosphocholine + N-(acetyl)-sphing-4-enine = 1-(9Z,12Z-octadecadienoyl)-N-acetylsphing-4-enine + 1-hexadecanoyl-sn-glycero-3-phosphocholine. The catalysed reaction is 1-hexadecanoyl-2-(5Z,8Z,11Z,14Z-eicosatetraenoyl)-sn-glycero-3-phosphocholine + N-(acetyl)-sphing-4-enine = 1-(5Z,8Z,11Z,14Z)-eicosatetraenoyl-N-(acetyl)-sphing-4-enine + 1-hexadecanoyl-sn-glycero-3-phosphocholine. It catalyses the reaction 1-hexadecanoyl-2-(4Z,7Z,10Z,13Z,16Z,19Z-docosahexaenoyl)-sn-glycero-3-phosphocholine + N-(acetyl)-sphing-4-enine = 1-(4Z,7Z,10Z,13Z,16Z,19Z-docosahexaenoyl)-N-(acetyl)-sphing-4-enine + 1-hexadecanoyl-sn-glycero-3-phosphocholine. It carries out the reaction 1-octadecanoyl-2-(9Z-octadecenoyl)-sn-glycero-3-phosphocholine + N-(acetyl)-sphing-4-enine = 1-(9Z-octadecenoyl)-N-(acetyl)-sphing-4-enine + 1-octadecanoyl-sn-glycero-3-phosphocholine. The enzyme catalyses 1-octadecanoyl-2-(9Z,12Z)-octadecadienoyl-sn-glycero-3-phosphocholine + N-(acetyl)-sphing-4-enine = 1-(9Z,12Z-octadecadienoyl)-N-acetylsphing-4-enine + 1-octadecanoyl-sn-glycero-3-phosphocholine. The catalysed reaction is 1-octadecanoyl-2-(5Z,8Z,11Z,14Z-eicosatetraenoyl)-sn-glycero-3-phosphocholine + N-(acetyl)-sphing-4-enine = 1-(5Z,8Z,11Z,14Z)-eicosatetraenoyl-N-(acetyl)-sphing-4-enine + 1-octadecanoyl-sn-glycero-3-phosphocholine. It catalyses the reaction 1-(9Z-octadecenoyl)-2-hexadecanoyl-sn-glycero-3-phosphocholine + N-(acetyl)-sphing-4-enine = 1-hexadecanoyl-N-(acetyl)-sphing-4-enine + 1-(9Z-octadecenoyl)-sn-glycero-3-phosphocholine. It carries out the reaction 1-(9Z)-octadecenoyl-2-octadecanoyl-sn-glycero-3-phosphocholine + N-(acetyl)-sphing-4-enine = 1-octadecanoyl-N-(acetyl)-sphing-4-enine + 1-(9Z-octadecenoyl)-sn-glycero-3-phosphocholine. The enzyme catalyses 1,2-di-(9Z-octadecenoyl)-sn-glycero-3-phosphocholine + N-(acetyl)-sphing-4-enine = 1-(9Z-octadecenoyl)-N-(acetyl)-sphing-4-enine + 1-(9Z-octadecenoyl)-sn-glycero-3-phosphocholine. The catalysed reaction is N-(acetyl)-sphing-4-enine + a 1,2-diacyl-sn-glycero-3-phosphocholine = 1-O-acyl-N-(acetyl)-sphing-4-enine + a 2-acyl-sn-glycero-3-phosphocholine. It catalyses the reaction 1-hexadecanoyl-2-(9Z-octadecenoyl)-sn-glycero-3-phosphocholine + N-(acetyl)-sphing-4-enine = 1-hexadecanoyl-N-(acetyl)-sphing-4-enine + 2-(9Z-octadecenoyl)-sn-glycero-3-phosphocholine. It carries out the reaction 1-hexadecanoyl-2-(9Z,12Z-octadecadienoyl)-sn-glycero-3-phosphocholine + N-(acetyl)-sphing-4-enine = 2-(9Z,12Z-octadecadienoyl)-sn-glycero-3-phosphocholine + 1-hexadecanoyl-N-(acetyl)-sphing-4-enine. The enzyme catalyses 1-hexadecanoyl-2-(5Z,8Z,11Z,14Z-eicosatetraenoyl)-sn-glycero-3-phosphocholine + N-(acetyl)-sphing-4-enine = 1-hexadecanoyl-N-(acetyl)-sphing-4-enine + 2-(5Z,8Z,11Z,14Z)-eicosatetraenoyl-sn-glycero-3-phosphocholine. The catalysed reaction is 1-hexadecanoyl-2-(4Z,7Z,10Z,13Z,16Z,19Z-docosahexaenoyl)-sn-glycero-3-phosphocholine + N-(acetyl)-sphing-4-enine = 2-(4Z,7Z,10Z,13Z,16Z,19Z-docosahexaenoyl)-sn-glycero-3-phosphocholine + 1-hexadecanoyl-N-(acetyl)-sphing-4-enine. It catalyses the reaction 1-hexadecanoyl-2-nonadioyl-sn-glycero-3-phosphocholine + N-(acetyl)-sphing-4-enine = 2-nonadioyl-sn-glycero-3-phosphocholine + 1-hexadecanoyl-N-(acetyl)-sphing-4-enine. It carries out the reaction 1-octadecanoyl-2-(9Z-octadecenoyl)-sn-glycero-3-phosphocholine + N-(acetyl)-sphing-4-enine = 1-octadecanoyl-N-(acetyl)-sphing-4-enine + 2-(9Z-octadecenoyl)-sn-glycero-3-phosphocholine. The enzyme catalyses 1-octadecanoyl-2-(5Z,8Z,11Z,14Z-eicosatetraenoyl)-sn-glycero-3-phosphocholine + N-(acetyl)-sphing-4-enine = 1-octadecanoyl-N-(acetyl)-sphing-4-enine + 2-(5Z,8Z,11Z,14Z)-eicosatetraenoyl-sn-glycero-3-phosphocholine. The catalysed reaction is 1-(9Z-octadecenoyl)-2-hexadecanoyl-sn-glycero-3-phosphocholine + N-(acetyl)-sphing-4-enine = 1-(9Z-octadecenoyl)-N-(acetyl)-sphing-4-enine + 2-hexadecanoyl-sn-glycero-3-phosphocholine. It catalyses the reaction 1-(9Z)-octadecenoyl-2-octadecanoyl-sn-glycero-3-phosphocholine + N-(acetyl)-sphing-4-enine = 2-octadecanoyl-sn-glycero-3-phosphocholine + 1-(9Z-octadecenoyl)-N-(acetyl)-sphing-4-enine. It carries out the reaction a 1,2-diacyl-sn-glycero-3-phospho-L-serine + N-(acetyl)-sphing-4-enine = a 2-acyl-sn-glycero-3-phospho-L-serine + 1-O-acyl-N-(acetyl)-sphing-4-enine. The enzyme catalyses 1-octadecanoyl-2-(9Z-octadecenoyl)-sn-glycero-3-phospho-L-serine + N-(acetyl)-sphing-4-enine = 2-(9Z-octadecenoyl)-sn-glycero-3-phospho-L-serine + 1-octadecanoyl-N-(acetyl)-sphing-4-enine. The catalysed reaction is a 1,2-diacyl-sn-glycero-3-phospho-L-serine + N-(acetyl)-sphing-4-enine = 1-O-acyl-N-(acetyl)-sphing-4-enine + a 1-acyl-sn-glycero-3-phospho-L-serine. It catalyses the reaction 1-octadecanoyl-2-(9Z-octadecenoyl)-sn-glycero-3-phospho-L-serine + N-(acetyl)-sphing-4-enine = 1-octadecanoyl-sn-glycero-3-phosphoserine + 1-(9Z-octadecenoyl)-N-(acetyl)-sphing-4-enine. It carries out the reaction a 1,2-diacyl-sn-glycero-3-phospho-(1'-sn-glycerol) + N-(acetyl)-sphing-4-enine = 2-acyl-sn-glycero-3-phospho-(1'-sn-glycerol) + 1-O-acyl-N-(acetyl)-sphing-4-enine. The enzyme catalyses 1-octadecanoyl-2-(9Z-octadecenoyl)-sn-glycero-3-phospho-(1'-sn-glycerol) + N-(acetyl)-sphing-4-enine = 2-(9Z-octadecenoyl)-sn-glycero-3-phospho-(1'-sn-glycerol) + 1-octadecanoyl-N-(acetyl)-sphing-4-enine. The catalysed reaction is a 1,2-diacyl-sn-glycero-3-phospho-(1'-sn-glycerol) + N-(acetyl)-sphing-4-enine = 1-O-acyl-N-(acetyl)-sphing-4-enine + 1-acyl-sn-glycero-3-phospho-(1'-sn-glycerol). It catalyses the reaction 1-octadecanoyl-2-(9Z-octadecenoyl)-sn-glycero-3-phospho-(1'-sn-glycerol) + N-(acetyl)-sphing-4-enine = 1-octadecanoyl-sn-glycero-3-phospho-(1'-sn-glycerol) + 1-(9Z-octadecenoyl)-N-(acetyl)-sphing-4-enine. It carries out the reaction an N-acylethanolamine + a 1,2-diacyl-sn-glycero-3-phosphocholine = 2-(acylamino)ethyl fatty acid + a 2-acyl-sn-glycero-3-phosphocholine. The enzyme catalyses an N-acylethanolamine + a 1,2-diacyl-sn-glycero-3-phosphocholine = 2-(acylamino)ethyl fatty acid + a 1-acyl-sn-glycero-3-phosphocholine. The catalysed reaction is N-(5Z,8Z,11Z,14Z-eicosatetraenoyl)-ethanolamine + 1,2-di-(9Z-octadecenoyl)-sn-glycero-3-phosphocholine = 2-[(5Z,8Z,11Z,14Z)-eicosatetraenoylamino]ethyl (9Z)-octadecenoate + (9Z-octadecenoyl)-sn-glycero-3-phosphocholine. It catalyses the reaction N-(9Z-octadecenoyl) ethanolamine + 1,2-di-(9Z-octadecenoyl)-sn-glycero-3-phosphocholine = 2-[(9Z)-octadecenoylamino]ethyl (9Z)-octadecenoate + (9Z-octadecenoyl)-sn-glycero-3-phosphocholine. It carries out the reaction a 3-acyl-sn-glycerol + a 1,2-diacyl-sn-glycero-3-phosphocholine = a 1,3-diacylglycerol + a 1-acyl-sn-glycero-3-phosphocholine. The enzyme catalyses a 3-acyl-sn-glycerol + a 1,2-diacyl-sn-glycero-3-phosphocholine = a 1,3-diacylglycerol + a 2-acyl-sn-glycero-3-phosphocholine. The catalysed reaction is 3-(9Z-octadecenoyl)-sn-glycerol + 1,2-di-(9Z-octadecenoyl)-sn-glycero-3-phosphocholine = 1,3-di-(9Z-octadecenoyl)-glycerol + (9Z-octadecenoyl)-sn-glycero-3-phosphocholine. It catalyses the reaction 3-hexadecanoyl-sn-glycerol + 1,2-di-(9Z-octadecenoyl)-sn-glycero-3-phosphocholine = 1-(9Z)-octadecenoyl-3-hexadecanoyl-sn-glycerol + (9Z-octadecenoyl)-sn-glycero-3-phosphocholine. It carries out the reaction a 1-acyl-sn-glycerol + a 1,2-diacyl-sn-glycero-3-phosphocholine = a 1,3-diacylglycerol + a 2-acyl-sn-glycero-3-phosphocholine. The enzyme catalyses a 1-acyl-sn-glycerol + a 1,2-diacyl-sn-glycero-3-phosphocholine = a 1,3-diacylglycerol + a 1-acyl-sn-glycero-3-phosphocholine. The catalysed reaction is 1-(9Z-octadecenoyl)-sn-glycerol + 1,2-di-(9Z-octadecenoyl)-sn-glycero-3-phosphocholine = 1,3-di-(9Z-octadecenoyl)-glycerol + (9Z-octadecenoyl)-sn-glycero-3-phosphocholine. It catalyses the reaction 1-hexadecanoyl-sn-glycerol + 1,2-di-(9Z-octadecenoyl)-sn-glycero-3-phosphocholine = 1-hexadecanoyl-3-(9Z)-octadecenoyl-sn-glycerol + (9Z-octadecenoyl)-sn-glycero-3-phosphocholine. It carries out the reaction a 2-acylglycerol + a 1,2-diacyl-sn-glycero-3-phosphocholine = a 1,2-diacylglycerol + a 2-acyl-sn-glycero-3-phosphocholine. The enzyme catalyses a 2-acylglycerol + a 1,2-diacyl-sn-glycero-3-phosphocholine = a 1,2-diacylglycerol + a 1-acyl-sn-glycero-3-phosphocholine. The catalysed reaction is 2-hexadecanoylglycerol + 1,2-di-(9Z-octadecenoyl)-sn-glycero-3-phosphocholine = 1-(9Z)-octadecenoyl-2-hexadecanoylglycerol + (9Z-octadecenoyl)-sn-glycero-3-phosphocholine. It catalyses the reaction 1-O-alkylglycerol + a 1,2-diacyl-sn-glycero-3-phosphocholine = 1-O-alkyl-3-acylglycerol + a 1-acyl-sn-glycero-3-phosphocholine. It carries out the reaction 1-O-alkylglycerol + a 1,2-diacyl-sn-glycero-3-phosphocholine = 1-O-alkyl-3-acylglycerol + a 2-acyl-sn-glycero-3-phosphocholine. The enzyme catalyses 1-O-hexadecylglycerol + 1,2-di-(9Z-octadecenoyl)-sn-glycero-3-phosphocholine = 1-O-hexadecyl-3-(9Z)-octadecenoylglycerol + (9Z-octadecenoyl)-sn-glycero-3-phosphocholine. The catalysed reaction is 1-O-alkyl-2-acyl-sn-glycerol + a 1,2-diacyl-sn-glycero-3-phosphocholine = 1-O-alkyl-2,3-diacyl-sn-glycerol + a 2-acyl-sn-glycero-3-phosphocholine. It catalyses the reaction 1-O-alkyl-2-acyl-sn-glycerol + a 1,2-diacyl-sn-glycero-3-phosphocholine = 1-O-alkyl-2,3-diacyl-sn-glycerol + a 1-acyl-sn-glycero-3-phosphocholine. It carries out the reaction 1-O-hexadecyl-2-acetyl-sn-glycerol + 1,2-di-(9Z-octadecenoyl)-sn-glycero-3-phosphocholine = 1-O-hexadecyl-2-acetyl-3-(9Z)-octadecenoyl-sn-glycerol + (9Z-octadecenoyl)-sn-glycero-3-phosphocholine. The enzyme catalyses 1-O-hexadecyl-2-O-methyl-sn-glycerol + 1,2-di-(9Z-octadecenoyl)-sn-glycero-3-phosphocholine = 1-O-hexadecyl-2-O-methyl-3-(9Z)-octadecenoyl-sn-glycerol + (9Z-octadecenoyl)-sn-glycero-3-phosphocholine. The catalysed reaction is a 1,2-diacyl-sn-glycero-3-phosphoethanolamine + H2O = a 1-acyl-sn-glycero-3-phosphoethanolamine + a fatty acid + H(+). It catalyses the reaction 1-acyl-2-(5Z,8Z,11Z,14Z)-eicosatetraenoyl-sn-glycero-3-phosphoethanolamine + H2O = a 1-acyl-sn-glycero-3-phosphoethanolamine + (5Z,8Z,11Z,14Z)-eicosatetraenoate + H(+). It carries out the reaction a 1,2-diacyl-sn-glycero-3-phospho-(1'-sn-glycerol) + H2O = 1-acyl-sn-glycero-3-phospho-(1'-sn-glycerol) + a fatty acid + H(+). The enzyme catalyses 1-hexadecanoyl-2-(9Z-octadecenoyl)-sn-glycero-3-phospho-(1'-sn-glycerol) + H2O = 1-hexadecanoyl-sn-glycero-3-phospho-(1'-sn-glycerol) + (9Z)-octadecenoate + H(+). The catalysed reaction is a 1,2-diacyl-sn-glycero-3-phospho-(1'-sn-glycerol) + H2O = 2-acyl-sn-glycero-3-phospho-(1'-sn-glycerol) + a fatty acid + H(+). It catalyses the reaction 1-hexadecanoyl-2-(9Z-octadecenoyl)-sn-glycero-3-phospho-(1'-sn-glycerol) + H2O = 2-(9Z-octadecenoyl)-sn-glycero-3-phospho-(1'-sn-glycerol) + hexadecanoate + H(+). With respect to regulation, inhibited by zinc ions at neutral pH. Zinc ions in plasma may keep the enzyme from hydrolyzing inappropriate substrates. In terms of biological role, has dual calcium-independent phospholipase and O-acyltransferase activities with a potential role in glycerophospholipid homeostasis and remodeling of acyl groups of lipophilic alcohols present in acidic cellular compartments. Catalyzes hydrolysis of the ester bond of the fatty acyl group attached at sn-1 or sn-2 position of phospholipids (phospholipase A1 or A2 activity) and transfer it to the hydroxyl group at the first carbon of lipophilic alcohols (O-acyltransferase activity). Among preferred fatty acyl donors are phosphatidylcholines, phosphatidylethanolamines, phosphatidylglycerols and phosphatidylserines. Favors sn-2 over sn-1 deacylation of unsaturated fatty acyl groups of phosphatidylcholines, phosphatidylethanolamines, and phosphatidylglycerols. Among preferred fatty acyl acceptors are natural lipophilic alcohols including short-chain ceramide N-acetyl-sphingosine (C2 ceramide), alkylacylglycerols, monoacylglycerols, and acylethanolamides such as anandamide and oleoylethanolamide. Selectively hydrolyzes the sn-1 fatty acyl group of truncated oxidized phospholipids and may play a role in detoxification of reactive oxidized phospholipids during oxidative stress. Required for normal phospholipid degradation in alveolar macrophages with potential implications in the clearance of pulmonary surfactant, which is mainly composed of dipalmitoylphosphatidylcholine (1,2-dihexadecanoyl-sn-glycero-3-phosphocholine). Involved in the first step of bis(monoacylglycero)phosphate (BMP) de novo synthesis from phosphatidylglycerol (1,2-diacyl-sn-glycero-3-phospho-(1'-sn-glycerol), PG). BMP is an important player in cargo sorting and degradation, regulation of cellular cholesterol levels and intercellular communication. At neutral pH, hydrolyzes the sn-1 fatty acyl group of the lysophosphatidylcholines. The sequence is that of Lysosomal phospholipase A and acyltransferase from Homo sapiens (Human).